The following is a 320-amino-acid chain: Cytochrome f (320 aa).

Residues 1–35 (MENRNTFSWVKEQITRSISVSIMIYVITRTSISNA) form the signal peptide. Y36, C56, C59, and H60 together coordinate heme. The chain crosses the membrane as a helical span at residues 286–306 (VQGLLFFFASVILAQVFLVLK).

Belongs to the cytochrome f family. The 4 large subunits of the cytochrome b6-f complex are cytochrome b6, subunit IV (17 kDa polypeptide, petD), cytochrome f and the Rieske protein, while the 4 small subunits are PetG, PetL, PetM and PetN. The complex functions as a dimer. Heme serves as cofactor.

The protein resides in the plastid. It localises to the chloroplast thylakoid membrane. Functionally, component of the cytochrome b6-f complex, which mediates electron transfer between photosystem II (PSII) and photosystem I (PSI), cyclic electron flow around PSI, and state transitions. This Hordeum vulgare (Barley) protein is Cytochrome f.